We begin with the raw amino-acid sequence, 371 residues long: Forkhead box protein E1 (371 aa).

Residues 21–53 form a disordered region; sequence EERGEAAAAGAGVPAEAAGRGAGGRRRKRPLQR. Positions 26–39 are enriched in low complexity; that stretch reads AAAAGAGVPAEAAG. A compositionally biased stretch (basic residues) spans 43–52; that stretch reads GGRRRKRPLQ. The segment at residues 55-149 is a DNA-binding region (fork-head); that stretch reads KPPYSYIALI…ESGSFLRRRK (95 aa).

In terms of processing, phosphorylated. As to expression, expressed in Rathke pouch, in thyroid, and in the epithelium of the pharyngeal wall and arches, whereas it is absent in the epithelium of the pharyngeal pouches.

It localises to the nucleus. In terms of biological role, transcription factor that binds consensus sites on a variety of gene promoters and activate their transcription. Involved in proper palate formation, most probably through the expression of MSX1 and TGFB3 genes which are direct targets of this transcription factor. Also implicated in thyroid gland morphogenesis. May indirectly play a role in cell growth and migration through the regulation of WNT5A expression. This chain is Forkhead box protein E1 (Foxe1), found in Mus musculus (Mouse).